Reading from the N-terminus, the 341-residue chain is MLETNDSVCELAYQLAYHPVYRSSQFWSMLVSSLSIPALIYFITRKIFFLHFHGNLKCLLIVYFICNLLFSMALCFAFFYQFLIPFFVTSKCQLLINTTLFKWGQICSFLLLTSSMLLPIGFSIERFVALGNAQKYESSRTFLGPVIIFIIIAVDFSIIFSVYKNEPFTEGFYSFILVPSTTASQINMYFFVLLFVKIFNLLLNCILLRIHKKIRIKYYSLSVRYEMEEILQSSKFTFIIRFTHLLFFGFYVVVILFVRIMGESFFNGTLNYSVARGVFCTVPTYNLIIVIIGIKSLRHLNLQRLNKVQSTVQIKSTGKEGSKNYEDIITNYWDSVSSRTP.

Residues Met-1–Ser-23 lie on the Extracellular side of the membrane. A glycan (N-linked (GlcNAc...) asparagine) is linked at Asn-5. A helical transmembrane segment spans residues Ser-24–Thr-44. Residues Arg-45–Cys-58 are Cytoplasmic-facing. A helical membrane pass occupies residues Leu-59–Phe-79. Over Tyr-80–Trp-103 the chain is Extracellular. Asn-97 carries an N-linked (GlcNAc...) asparagine glycan. Residues Gly-104 to Ile-124 traverse the membrane as a helical segment. Over Glu-125–Thr-141 the chain is Cytoplasmic. The chain crosses the membrane as a helical span at residues Phe-142–Val-162. The Extracellular portion of the chain corresponds to Tyr-163–Asn-187. A helical transmembrane segment spans residues Met-188–Leu-208. The Cytoplasmic segment spans residues Arg-209–Thr-237. The helical transmembrane segment at Phe-238 to Val-258 threads the bilayer. The Extracellular portion of the chain corresponds to Arg-259–Arg-276. N-linked (GlcNAc...) asparagine glycosylation is found at Asn-267 and Asn-271. A helical transmembrane segment spans residues Gly-277–Leu-297. Residues Arg-298 to Pro-341 are Cytoplasmic-facing.

It belongs to the nematode receptor-like protein srb family. In terms of tissue distribution, expressed throughout the head.

Its subcellular location is the cell membrane. The protein resides in the perikaryon. It localises to the cell projection. The protein localises to the dendrite. In terms of biological role, G-protein coupled receptor. The chain is Serpentine receptor class beta-3 from Caenorhabditis elegans.